The following is a 686-amino-acid chain: Leucine-rich repeat-containing protein 49 (686 aa).

LRR repeat units follow at residues 113-134 (HLRL…SNLQ), 135-156 (KLIS…STLR), 157-178 (CLRV…ENLK), 179-200 (SLDV…NHLC), 201-222 (ELRV…NGLD), 223-244 (SLTE…DNLP), and 245-266 (CLQH…SCLA). The LRRCT domain occupies 279–317 (NPIAQESWYKHTVLQNMMQLRQLDMKRITEEERRMASVL). Residues 303-341 (MKRITEEERRMASVLAKKEEEKKRESHKQSLLKEKKRLT) adopt a coiled-coil conformation. Residues 360–388 (ATNEDRKDSDSPQDPCQIDGSTLSAFPEE) form a disordered region.

In terms of assembly, part of the neuronal tubulin polyglutamylase complex which contains TPGS1, TPGS2, TTLL1, LRRC49 and NICN1. Interacts with PCM1; TTLL1, TPGS1, TPGS2 and LRRC49.

Its subcellular location is the cytoplasm. The protein resides in the cytoskeleton. It is found in the microtubule organizing center. The protein localises to the centrosome. It localises to the centriolar satellite. Subunit of the tubulin polyglutamylase complex (TPGC). The complex mediates cilia and flagella polyglutamylation which is essential for their biogenesis and motility. The polypeptide is Leucine-rich repeat-containing protein 49 (Homo sapiens (Human)).